A 109-amino-acid polypeptide reads, in one-letter code: Nucleoid-associated protein APL_0075 (109 aa).

Residues 1–21 form a disordered region; sequence MFGKGGLGGLMKQAQQMQERM. Low complexity predominate over residues 10-19; sequence LMKQAQQMQE.

The protein belongs to the YbaB/EbfC family. As to quaternary structure, homodimer.

The protein resides in the cytoplasm. The protein localises to the nucleoid. In terms of biological role, binds to DNA and alters its conformation. May be involved in regulation of gene expression, nucleoid organization and DNA protection. This is Nucleoid-associated protein APL_0075 from Actinobacillus pleuropneumoniae serotype 5b (strain L20).